The following is a 311-amino-acid chain: Homeobox protein Hox-B1a (311 aa).

The homeobox DNA-binding region spans 217-276; the sequence is QNTIRTNFTTKQLTELEKEFHFSKYLTRARRVEIAATLELNETQVKIWFQNRRMKQKKRE. The interval 267–311 is disordered; that stretch reads NRRMKQKKREKEGLAPASSTSSKDLEDQSDHSTSTSPEASPSPDS. The span at 298–311 shows a compositional bias: low complexity; that stretch reads STSTSPEASPSPDS.

It belongs to the Antp homeobox family. Labial subfamily.

Its subcellular location is the nucleus. Its function is as follows. Sequence-specific transcription factor which is part of a developmental regulatory system that provides cells with specific positional identities on the anterior-posterior axis. The polypeptide is Homeobox protein Hox-B1a (hoxb1a) (Danio rerio (Zebrafish)).